The following is a 1245-amino-acid chain: ABC transporter B family member 13 (1245 aa).

Residues 1–14 (MDNTERSSNGNIQA) are compositionally biased toward polar residues. A disordered region spans residues 1–20 (MDNTERSSNGNIQAETEAKE). Residues 47-336 (MLLGGLGACI…AAPSLSAIAK (290 aa)) form the ABC transmembrane type-1 1 domain. Residues 48 to 68 (LLGGLGACIHGATLPLFFVFF) form a helical membrane-spanning segment. The N-linked (GlcNAc...) asparagine glycan is linked to Asn77. Transmembrane regions (helical) follow at residues 94 to 114 (LYLVYLGLVNFVSAWIGVSCW), 171 to 191 (HVLRYLSQFIAGFVIGFLSVW), 195 to 215 (LLTLGVVPLIAIAGGGYAIVM), 276 to 296 (LGVGLTYSLLFCAWALLLWYA), and 314 to 334 (ILNVIFSGFALGQAAPSLSAI). 2 N-linked (GlcNAc...) asparagine glycosylation sites follow: Asn351 and Asn391. The ABC transporter 1 domain maps to 372 to 607 (IEFQKVSFAY…GGDYATLVNC (236 aa)). ATP is bound at residue 406 to 413 (GPSGSGKS). The segment covering 610 to 629 (TEPQENSRSIMSETCKSQAG) has biased composition (polar residues). A disordered region spans residues 610–660 (TEPQENSRSIMSETCKSQAGSSSSRRVSSSRRTSSFRVDQEKTKNDDSKKD). The segment covering 630–646 (SSSSRRVSSSRRTSSFR) has biased composition (low complexity). Residues 647-660 (VDQEKTKNDDSKKD) show a composition bias toward basic and acidic residues. Residues 681-969 (ALLGSIGAVL…TLALTPDIVK (289 aa)) form the ABC transmembrane type-1 2 domain. A run of 2 helical transmembrane segments spans residues 686–706 (IGAVLAGAQTPLFSMGIAYVL) and 725–745 (AIIFAGAGIVTAPIYLLQHYF). Residue Asn778 is glycosylated (N-linked (GlcNAc...) asparagine). 4 helical membrane passes run 805–822 (IVQNLSLTVTALALAFFY), 828–848 (AVVTACFPLLIAASLTEQLFL), 913–933 (LSQFLAFCSYALGLWYVSVLI), and 947–967 (FMVLIVTAFSVSETLALTPDI). The 237-residue stretch at 1004 to 1240 (IEFRNVSFVY…PNGFYKQLTS (237 aa)) folds into the ABC transporter 2 domain. Asn1008 carries an N-linked (GlcNAc...) asparagine glycan. 1039 to 1046 (GPSGSGKS) is a binding site for ATP. A glycan (N-linked (GlcNAc...) asparagine) is linked at Asn1106.

The protein belongs to the ABC transporter superfamily. ABCB family. Multidrug resistance exporter (TC 3.A.1.201) subfamily.

Its subcellular location is the membrane. The protein is ABC transporter B family member 13 (ABCB13) of Arabidopsis thaliana (Mouse-ear cress).